Reading from the N-terminus, the 204-residue chain is uncharacterized protein (204 aa).

Functionally, possibly involved in pGI2 replication mechanism. This is an uncharacterized protein from Bacillus thuringiensis.